We begin with the raw amino-acid sequence, 364 residues long: MAMPRYLTEPAFRHDYAPKTGVLLINLGTPDAPTAQALRPYLKQFLSDPRVIEIPRLPWWLILNGIILNTRPKQSAKKYASIWTKEGSPLLLHTRSQAKLLKGQLGEMGLHNLAVDYAMRYGNPSIESVIGKMREQGVERLLLLPLYPQYAASSSATALDEAFRVLSRLRNMPEVRTVRHFHDDPGYIAALAAQIRKHWQYGQRPDKLVMSFHGVPRFTRDKGDPYHCECQKTGRLLAEALQLRPDQYVISFQSRFGRTEWLKPYTSEVLEALGKAKTARVDVVCPGFVGDCLETLEEIAMEGKETFLSHGGGEFRYIPCLNEDPQWISSLAGIVRNNLAGWTEIRAEDSQQRAALAHDMGASA.

Residues His-213 and Glu-294 each coordinate Fe cation.

This sequence belongs to the ferrochelatase family.

It localises to the cytoplasm. It catalyses the reaction heme b + 2 H(+) = protoporphyrin IX + Fe(2+). The protein operates within porphyrin-containing compound metabolism; protoheme biosynthesis; protoheme from protoporphyrin-IX: step 1/1. Functionally, catalyzes the ferrous insertion into protoporphyrin IX. This is Ferrochelatase from Chromobacterium violaceum (strain ATCC 12472 / DSM 30191 / JCM 1249 / CCUG 213 / NBRC 12614 / NCIMB 9131 / NCTC 9757 / MK).